Consider the following 261-residue polypeptide: Segregation and condensation protein A (261 aa).

This sequence belongs to the ScpA family. In terms of assembly, component of a cohesin-like complex composed of ScpA, ScpB and the Smc homodimer, in which ScpA and ScpB bind to the head domain of Smc. The presence of the three proteins is required for the association of the complex with DNA.

The protein localises to the cytoplasm. Its function is as follows. Participates in chromosomal partition during cell division. May act via the formation of a condensin-like complex containing Smc and ScpB that pull DNA away from mid-cell into both cell halves. The chain is Segregation and condensation protein A from Leptospira interrogans serogroup Icterohaemorrhagiae serovar copenhageni (strain Fiocruz L1-130).